Consider the following 37-residue polypeptide: Large ribosomal subunit protein bL36 (37 aa).

Belongs to the bacterial ribosomal protein bL36 family.

The protein is Large ribosomal subunit protein bL36 of Leptothrix cholodnii (strain ATCC 51168 / LMG 8142 / SP-6) (Leptothrix discophora (strain SP-6)).